The primary structure comprises 373 residues: D-amino-acid transaminase, chloroplastic (373 aa).

A chloroplast-targeting transit peptide spans methionine 1 to leucine 57. Pyridoxal 5'-phosphate is bound at residue arginine 128. Residue lysine 222 is the Proton acceptor of the active site. Lysine 222 is subject to N6-(pyridoxal phosphate)lysine. Glutamate 255 contributes to the pyridoxal 5'-phosphate binding site.

Belongs to the class-IV pyridoxal-phosphate-dependent aminotransferase family. As to quaternary structure, homodimer. Requires pyridoxal 5'-phosphate as cofactor.

It is found in the plastid. The protein localises to the chloroplast. It carries out the reaction D-alanine + 2-oxoglutarate = D-glutamate + pyruvate. It catalyses the reaction 4-amino-4-deoxychorismate = 4-aminobenzoate + pyruvate + H(+). The protein operates within cofactor biosynthesis; tetrahydrofolate biosynthesis; 4-aminobenzoate from chorismate: step 2/2. With respect to regulation, inhibited by hydroxylamine or amino-oxyacetic acid. Its function is as follows. Amino acid aminotransferase showing activity for D-Asp and D-Ala as amino donors with 2-oxoglutarate as an amino acceptor. Can also use D-Met, D-Tyr, D-Phe, D-Gln, D-Trp and D-Asn as substrates, but no activity with L-Asp, L-Ala, L-Leu, L-Ile or L-Val. Also catalyzes the reverse reaction where an amino group is transferred from D-Glu to pyruvate or oxaloacetate to produce D-Ala or D-Asp, respectively. Also involved in folate biosynthesis, acting as an aminodeoxychorismate lyase converting 4-amino-4-deoxychorismate (ADC) to p-aminobenzoate (PABA). In Arabidopsis thaliana (Mouse-ear cress), this protein is D-amino-acid transaminase, chloroplastic.